Reading from the N-terminus, the 221-residue chain is N-(5'-phosphoribosyl)anthranilate isomerase (221 aa).

The protein belongs to the TrpF family.

It catalyses the reaction N-(5-phospho-beta-D-ribosyl)anthranilate = 1-(2-carboxyphenylamino)-1-deoxy-D-ribulose 5-phosphate. It functions in the pathway amino-acid biosynthesis; L-tryptophan biosynthesis; L-tryptophan from chorismate: step 3/5. This chain is N-(5'-phosphoribosyl)anthranilate isomerase, found in Chlorobaculum tepidum (strain ATCC 49652 / DSM 12025 / NBRC 103806 / TLS) (Chlorobium tepidum).